The sequence spans 71 residues: UPF0346 protein SUB0487 (71 aa).

Belongs to the UPF0346 family.

This chain is UPF0346 protein SUB0487, found in Streptococcus uberis (strain ATCC BAA-854 / 0140J).